The following is a 1163-amino-acid chain: NACHT, LRR and PYD domains-containing protein 5 (1163 aa).

Basic and acidic residues-rich tracts occupy residues 1–42 (MGPP…KDQG), 56–94 (PEKE…KDQG), and 108–127 (PEKD…EQKS). Positions 1–201 (MGPPEKESKA…TEADKDNGGD (201 aa)) are disordered. Polar residues predominate over residues 128–137 (ESTMSPSENV). Basic and acidic residues predominate over residues 153 to 173 (ASERKMTSPENDSKSIQKDQG). In terms of domain architecture, NACHT spans 243-565 (HTIILHGRPG…AALYYVLEGL (323 aa)). 249 to 256 (GRPGVGKS) is a binding site for ATP. LRR repeat units lie at residues 801–822 (NLKY…LACE), 830–851 (SVET…MIST), 858–878 (RLKC…ISLG), 887–906 (LLQK…CHLL), 915–935 (NLTH…QQLC), 944–964 (ALQR…GFLA), 972–993 (KLTH…LLCE), 1001–1022 (YLQE…DLAC), 1029–1050 (HLKS…TLCE), 1058–1079 (SLRR…ALSL), and 1086–1107 (HLNS…KLCS).

Belongs to the NLRP family. In terms of assembly, component of the subcortical maternal complex (SCMC), at least composed of NLRP5, KHDC3, OOEP, and TLE6. Within the complex, interacts with OOEP, KHDC3 and TLE6. The SCMC may facilitate translocation of its components between the nuclear and cytoplasmic compartments. As part of the SCMC interacts with the SCMC-associated protein ZBED3. As part of the SCMC interacts with the SCMC-associated protein CFL1/Cofilin-1. Interacts with PRKCE. Interacts with TUBB3 at cytoskeleton microtubules. In terms of processing, phosphorylated by PRKCE.

The protein resides in the cytoplasm. The protein localises to the cytoplasmic vesicle. It localises to the secretory vesicle. Its subcellular location is the cortical granule. It is found in the mitochondrion. The protein resides in the nucleus. The protein localises to the nucleolus. It localises to the golgi apparatus. Functionally, component of the subcortical maternal complex (SCMC), a multiprotein complex that plays a key role in early embryonic development. The SCMC complex is a structural constituent of cytoplasmic lattices, which consist in fibrous structures found in the cytoplasm of oocytes and preimplantation embryos. They are required to store maternal proteins critical for embryonic development, such as proteins that control epigenetic reprogramming of the preimplantation embryo, and prevent their degradation or activation. Required for the localization of cortical granules to the cortex of oocytes, via association with the cortical actin scaffold. Required for cortical actin clearance prior to oocyte exocytosis and prevention of polyspermy. Involved in regulating post-fertilization Ca(2+) release and endoplasmic reticulum storage (ER) storage via regulation of cellular localization. May be involved in the localization of mitochondria to the cytoplasm and perinuclear region in oocytes and early stage embryos, independent of its role in CPL formation. This chain is NACHT, LRR and PYD domains-containing protein 5, found in Mus musculus (Mouse).